The following is a 135-amino-acid chain: Fluoride-specific ion channel FluC (135 aa).

Helical transmembrane passes span 12-32 (FLVI…LGLS), 42-62 (LGTL…VGIF), 70-90 (LAWK…FSTF), and 106-126 (AIGL…LGLL). Na(+) contacts are provided by Gly82 and Thr85.

It belongs to the fluoride channel Fluc/FEX (TC 1.A.43) family.

Its subcellular location is the cell inner membrane. The catalysed reaction is fluoride(in) = fluoride(out). With respect to regulation, na(+) is not transported, but it plays an essential structural role and its presence is essential for fluoride channel function. Functionally, fluoride-specific ion channel. Important for reducing fluoride concentration in the cell, thus reducing its toxicity. In Dechloromonas aromatica (strain RCB), this protein is Fluoride-specific ion channel FluC.